Here is a 126-residue protein sequence, read N- to C-terminus: Small ribosomal subunit protein uS12 (126 aa).

Position 89 is a 3-methylthioaspartic acid (aspartate 89). Positions 99 to 126 (RGSLDTSGVNDRKQGRSKYGTKKPKDKK) are disordered. Residues 113–126 (GRSKYGTKKPKDKK) show a composition bias toward basic residues.

It belongs to the universal ribosomal protein uS12 family. As to quaternary structure, part of the 30S ribosomal subunit. Contacts proteins S8 and S17. May interact with IF1 in the 30S initiation complex.

In terms of biological role, with S4 and S5 plays an important role in translational accuracy. Functionally, interacts with and stabilizes bases of the 16S rRNA that are involved in tRNA selection in the A site and with the mRNA backbone. Located at the interface of the 30S and 50S subunits, it traverses the body of the 30S subunit contacting proteins on the other side and probably holding the rRNA structure together. The combined cluster of proteins S8, S12 and S17 appears to hold together the shoulder and platform of the 30S subunit. In Legionella pneumophila (strain Paris), this protein is Small ribosomal subunit protein uS12.